Here is a 215-residue protein sequence, read N- to C-terminus: MTTDYKSPLRVGIGGPVGSGKTALLEKLCKAMRDDYHIAVVTNDIYTKEDQRILTEAQALEPERIVGVETGGCPHTAIREDASMNLAAVENLARKFGNLDVVFVESGGDNLSATFSPELADLTIYVIDVASGEKIPRKGGPGITKSDLLVINKIDLAPMVGADLGIMASDTNRMRGQKPWAFSNLRNDVEGLEKIIGFVVEEGMLVSHSEKAVSG.

15–22 (GPVGSGKT) is a GTP binding site.

This sequence belongs to the SIMIBI class G3E GTPase family. UreG subfamily. In terms of assembly, homodimer. UreD, UreF and UreG form a complex that acts as a GTP-hydrolysis-dependent molecular chaperone, activating the urease apoprotein by helping to assemble the nickel containing metallocenter of UreC. The UreE protein probably delivers the nickel.

It is found in the cytoplasm. Functionally, facilitates the functional incorporation of the urease nickel metallocenter. This process requires GTP hydrolysis, probably effectuated by UreG. The polypeptide is Urease accessory protein UreG (Alcanivorax borkumensis (strain ATCC 700651 / DSM 11573 / NCIMB 13689 / SK2)).